Consider the following 189-residue polypeptide: Peptidyl-tRNA hydrolase (189 aa).

Residue Y14 coordinates tRNA. H19 (proton acceptor) is an active-site residue. Residues F64, N66, and N112 each contribute to the tRNA site.

The protein belongs to the PTH family. In terms of assembly, monomer.

Its subcellular location is the cytoplasm. The catalysed reaction is an N-acyl-L-alpha-aminoacyl-tRNA + H2O = an N-acyl-L-amino acid + a tRNA + H(+). Its function is as follows. Hydrolyzes ribosome-free peptidyl-tRNAs (with 1 or more amino acids incorporated), which drop off the ribosome during protein synthesis, or as a result of ribosome stalling. Functionally, catalyzes the release of premature peptidyl moieties from peptidyl-tRNA molecules trapped in stalled 50S ribosomal subunits, and thus maintains levels of free tRNAs and 50S ribosomes. This Sphingopyxis alaskensis (strain DSM 13593 / LMG 18877 / RB2256) (Sphingomonas alaskensis) protein is Peptidyl-tRNA hydrolase.